The chain runs to 428 residues: Histidinol dehydrogenase homolog (428 aa).

Zn(2+) is bound by residues glutamine 250 and histidine 253. Catalysis depends on proton acceptor residues glutamate 320 and histidine 321. The Zn(2+) site is built by aspartate 354 and histidine 413.

It belongs to the histidinol dehydrogenase family. It depends on Zn(2+) as a cofactor.

In Pelagibacter ubique (strain HTCC1062), this protein is Histidinol dehydrogenase homolog.